Here is a 178-residue protein sequence, read N- to C-terminus: ATP synthase subunit delta (178 aa).

It belongs to the ATPase delta chain family. In terms of assembly, F-type ATPases have 2 components, F(1) - the catalytic core - and F(0) - the membrane proton channel. F(1) has five subunits: alpha(3), beta(3), gamma(1), delta(1), epsilon(1). F(0) has three main subunits: a(1), b(2) and c(10-14). The alpha and beta chains form an alternating ring which encloses part of the gamma chain. F(1) is attached to F(0) by a central stalk formed by the gamma and epsilon chains, while a peripheral stalk is formed by the delta and b chains.

Its subcellular location is the cell inner membrane. Its function is as follows. F(1)F(0) ATP synthase produces ATP from ADP in the presence of a proton or sodium gradient. F-type ATPases consist of two structural domains, F(1) containing the extramembraneous catalytic core and F(0) containing the membrane proton channel, linked together by a central stalk and a peripheral stalk. During catalysis, ATP synthesis in the catalytic domain of F(1) is coupled via a rotary mechanism of the central stalk subunits to proton translocation. This protein is part of the stalk that links CF(0) to CF(1). It either transmits conformational changes from CF(0) to CF(1) or is implicated in proton conduction. The chain is ATP synthase subunit delta from Hahella chejuensis (strain KCTC 2396).